The chain runs to 534 residues: CTP synthase (534 aa).

The segment at 1 to 268 (MSVKYIFVTG…AKIVCKRLGL (268 aa)) is amidoligase domain. Residue Ser14 coordinates CTP. Ser14 is a binding site for UTP. Residue 15–20 (GLGKGI) coordinates ATP. Residue Tyr55 participates in L-glutamine binding. Asp72 contacts ATP. Asp72 and Glu142 together coordinate Mg(2+). Residues 149-151 (DIE), 189-194 (KTKPTQ), and Lys225 contribute to the CTP site. Residues 189–194 (KTKPTQ) and Lys225 each bind UTP. A Glutamine amidotransferase type-1 domain is found at 293–534 (TIGLVGKYVE…VRAAYEYKTK (242 aa)). Gly355 is an L-glutamine binding site. Residue Cys382 is the Nucleophile; for glutamine hydrolysis of the active site. L-glutamine contacts are provided by residues 383 to 386 (LGMQ), Glu406, and Arg462. Residues His507 and Glu509 contribute to the active site.

Belongs to the CTP synthase family. In terms of assembly, homotetramer.

It catalyses the reaction UTP + L-glutamine + ATP + H2O = CTP + L-glutamate + ADP + phosphate + 2 H(+). The enzyme catalyses L-glutamine + H2O = L-glutamate + NH4(+). The catalysed reaction is UTP + NH4(+) + ATP = CTP + ADP + phosphate + 2 H(+). It functions in the pathway pyrimidine metabolism; CTP biosynthesis via de novo pathway; CTP from UDP: step 2/2. With respect to regulation, allosterically activated by GTP, when glutamine is the substrate; GTP has no effect on the reaction when ammonia is the substrate. The allosteric effector GTP functions by stabilizing the protein conformation that binds the tetrahedral intermediate(s) formed during glutamine hydrolysis. Inhibited by the product CTP, via allosteric rather than competitive inhibition. Its function is as follows. Catalyzes the ATP-dependent amination of UTP to CTP with either L-glutamine or ammonia as the source of nitrogen. Regulates intracellular CTP levels through interactions with the four ribonucleotide triphosphates. The polypeptide is CTP synthase (Ruminiclostridium cellulolyticum (strain ATCC 35319 / DSM 5812 / JCM 6584 / H10) (Clostridium cellulolyticum)).